Consider the following 330-residue polypeptide: Aspartate--ammonia ligase (330 aa).

It belongs to the class-II aminoacyl-tRNA synthetase family. AsnA subfamily.

The protein resides in the cytoplasm. The enzyme catalyses L-aspartate + NH4(+) + ATP = L-asparagine + AMP + diphosphate + H(+). It participates in amino-acid biosynthesis; L-asparagine biosynthesis; L-asparagine from L-aspartate (ammonia route): step 1/1. This Yersinia enterocolitica serotype O:8 / biotype 1B (strain NCTC 13174 / 8081) protein is Aspartate--ammonia ligase.